The following is a 452-amino-acid chain: Keratin, type II cytoskeletal 80 (452 aa).

The tract at residues 1–82 (MACRSCVVGF…DPAVQQLKNQ (82 aa)) is head. Ser45 bears the Phosphoserine mark. The interval 82–118 (QEKEEMKALNDKFASLIGKVQALEQRNQLLETRWSFL) is coil 1A. One can recognise an IF rod domain in the interval 83-394 (EKEEMKALND…KLVEGEEGRM (312 aa)). The linker 1 stretch occupies residues 119–135 (QGQDSAIFDLGHLYEEY). Residues 136–227 (QGRLQEELRK…TIYEQELKDL (92 aa)) form a coil 1B region. A linker 12 region spans residues 228–251 (AAQVKDVSVTVGMDSRCHIDLSGI). The segment at 252–390 (VEEVKAQYDA…ATYRKLVEGE (139 aa)) is coil 2. The tract at residues 391 to 452 (EGRMDSPSAT…YFSQESEVSE (62 aa)) is tail. Position 396 is a phosphoserine (Ser396). The segment at 412 to 434 (AASRSGLSKAPSRKKKGSKGPVI) is disordered.

The protein belongs to the intermediate filament family. In terms of assembly, heterotetramer of two type I and two type II keratins. In terms of tissue distribution, weakly expressed in tongue, but not skin or in any other tissues or organs examined.

This chain is Keratin, type II cytoskeletal 80 (KRT80), found in Homo sapiens (Human).